Reading from the N-terminus, the 199-residue chain is Inner membrane-spanning protein YciB (199 aa).

5 helical membrane passes run 3 to 23 (LLID…WGIY), 47 to 67 (VEPM…ATLL), 76 to 96 (WKPS…QLVF), 119 to 139 (LNWS…VIAY), and 149 to 169 (FKLF…AIYM). The interval 180–199 (AAAATPDALPPPGVQQDKQP) is disordered.

This sequence belongs to the YciB family.

Its subcellular location is the cell inner membrane. Plays a role in cell envelope biogenesis, maintenance of cell envelope integrity and membrane homeostasis. In Delftia acidovorans (strain DSM 14801 / SPH-1), this protein is Inner membrane-spanning protein YciB.